The primary structure comprises 2167 residues: GTPase-activating protein BEM2/IPL2 (2167 aa).

Disordered stretches follow at residues 1–209, 243–305, and 353–372; these read MKGL…NDNE, TNYN…ASAR, and NSSIANENHQQKKQQTNNQA. Residues 12–51 are compositionally biased toward low complexity; that stretch reads SSTASASSSSTSTSHKTTTASTASSSSPSSSSQTIRNSTS. Residue K27 forms a Glycyl lysine isopeptide (Lys-Gly) (interchain with G-Cter in ubiquitin) linkage. Residues 58–70 are compositionally biased toward basic residues; that stretch reads HSHHHHGQGHSHH. The segment covering 89–118 has biased composition (polar residues); that stretch reads KQYTSTSSSQVNLGMYHSDTNTRSSRSIAS. S129 carries the phosphoserine modification. Polar residues predominate over residues 134–145; it reads SNSSSQKSNAQD. Composition is skewed to low complexity over residues 160 to 177 and 187 to 207; these read SLLPSRSSSLSPPQSRCS and NTSGISNSSGTNNNNSNNNND. The segment covering 243 to 252 has biased composition (polar residues); it reads TNYNSSMTAP. A Phosphoserine modification is found at S283. The span at 289 to 300 shows a compositional bias: low complexity; it reads SSSTTATNSGND. In terms of domain architecture, Ras-GEF spans 592 to 859; sequence DITTLADEVH…MKLSVQHEPP (268 aa). S1012 and S1016 each carry phosphoserine. T1038 is subject to Phosphothreonine. Residues S1046, S1054, and S1128 each carry the phosphoserine modification. Positions 1771-1794 are enriched in polar residues; sequence ISGTHSDNDHSYNINKNTGQTPSL. Residues 1771 to 1828 form a disordered region; the sequence is ISGTHSDNDHSYNINKNTGQTPSLGSVMESNNSARNRRDSRASFSTNRSSVVSNSSHN. The segment covering 1812 to 1828 has biased composition (low complexity); the sequence is ASFSTNRSSVVSNSSHN. One can recognise a PH domain in the interval 1846–1948; it reads GFNTSSSNYS…WIKMIKASKR (103 aa). The 199-residue stretch at 1967-2165 folds into the Rho-GAP domain; it reads VPLEDVCERE…DFIKNPNDYF (199 aa).

In terms of biological role, GTPase-activating protein (GAP) for RHO1 and RHO2. Involved in the control of cellular morphogenesis. Required for proper bud site selection and bud emergence. This Saccharomyces cerevisiae (strain ATCC 204508 / S288c) (Baker's yeast) protein is GTPase-activating protein BEM2/IPL2 (BEM2).